The sequence spans 584 residues: WD repeat-containing protein JIP5 (584 aa).

WD repeat units lie at residues 128-173 (RHKG…GKVD), 180-219 (SAKD…GTNK), 269-314 (DQED…LADQ), and 378-415 (DAVD…DQEE). Disordered stretches follow at residues 409–497 (YSDD…SEYI) and 516–563 (KKLI…EKKV). Composition is skewed to acidic residues over residues 412 to 429 (DQEE…EEDS) and 450 to 460 (FDSENNDDGEE). Basic and acidic residues-rich tracts occupy residues 483-493 (TRNEENKDNTK) and 528-552 (SKKE…EVPQ).

This sequence belongs to the WD repeat WDR55 family.

Its subcellular location is the nucleus. The protein localises to the nucleolus. This chain is WD repeat-containing protein JIP5 (JIP5), found in Lodderomyces elongisporus (strain ATCC 11503 / CBS 2605 / JCM 1781 / NBRC 1676 / NRRL YB-4239) (Yeast).